A 165-amino-acid polypeptide reads, in one-letter code: Pyruvoyl-dependent arginine decarboxylase 1 (165 aa).

Ser45 is modified (pyruvic acid (Ser)).

Belongs to the PdaD family. Pyruvate is required as a cofactor.

The enzyme catalyses L-arginine + H(+) = agmatine + CO2. In Methanosarcina mazei (strain ATCC BAA-159 / DSM 3647 / Goe1 / Go1 / JCM 11833 / OCM 88) (Methanosarcina frisia), this protein is Pyruvoyl-dependent arginine decarboxylase 1 (pdaD1).